The chain runs to 316 residues: Non-structural protein NS-S (316 aa).

Belongs to the phlebovirus NS-S protein family. As to quaternary structure, interacts with host RIGI; this interaction targets RIGI to proteasomal degradation. Interacts with host EIF2AK2/PKR; this interaction leads to the proteasomal degradation of host EIF2AK2/PKR.

In terms of biological role, promotes the proteasomal degradation of host EIF2AK2/PKR but is unable to suppress host general transcription. Prevents the establishment of the host antiviral state by interfering with beta interferon (IFN-beta) production. Interacts with host RIGI and targets it for proteasomal degradation, thereby inhibiting RIGI-mediated signaling pathway. This Toscana virus (Tos) protein is Non-structural protein NS-S (NSS).